We begin with the raw amino-acid sequence, 193 residues long: Peptidyl-tRNA hydrolase (193 aa).

His-17 contacts tRNA. The Proton acceptor role is filled by His-22. Residues Phe-68, Asn-70, and Asn-116 each contribute to the tRNA site.

This sequence belongs to the PTH family. Monomer.

The protein resides in the cytoplasm. It carries out the reaction an N-acyl-L-alpha-aminoacyl-tRNA + H2O = an N-acyl-L-amino acid + a tRNA + H(+). Its function is as follows. Hydrolyzes ribosome-free peptidyl-tRNAs (with 1 or more amino acids incorporated), which drop off the ribosome during protein synthesis, or as a result of ribosome stalling. Catalyzes the release of premature peptidyl moieties from peptidyl-tRNA molecules trapped in stalled 50S ribosomal subunits, and thus maintains levels of free tRNAs and 50S ribosomes. The chain is Peptidyl-tRNA hydrolase from Xanthomonas campestris pv. campestris (strain ATCC 33913 / DSM 3586 / NCPPB 528 / LMG 568 / P 25).